We begin with the raw amino-acid sequence, 137 residues long: Acidic phospholipase A2 beta-bungarotoxin A6 chain (137 aa).

A signal peptide spans 1 to 9 (AVCVSLLGA). The propeptide occupies 10-17 (ANIPPQHL). Cystine bridges form between Cys-44-Cys-136, Cys-46-Cys-62, Cys-61-Cys-117, Cys-68-Cys-110, Cys-78-Cys-103, and Cys-96-Cys-108. Ca(2+)-binding residues include Tyr-45, Gly-47, and Gly-49. His-65 is a catalytic residue. Asp-66 provides a ligand contact to Ca(2+). Asp-111 is an active-site residue.

The protein belongs to the phospholipase A2 family. Group I subfamily. D49 sub-subfamily. In terms of assembly, heterodimer; disulfide-linked. The A chains have phospholipase A2 activity and the B chains show homology with the basic protease inhibitors. Ca(2+) serves as cofactor. As to expression, expressed by the venom gland.

The protein localises to the secreted. The enzyme catalyses a 1,2-diacyl-sn-glycero-3-phosphocholine + H2O = a 1-acyl-sn-glycero-3-phosphocholine + a fatty acid + H(+). Snake venom phospholipase A2 (PLA2) that inhibits neuromuscular transmission by blocking acetylcholine release from the nerve termini. PLA2 catalyzes the calcium-dependent hydrolysis of the 2-acyl groups in 3-sn-phosphoglycerides. This Bungarus multicinctus (Many-banded krait) protein is Acidic phospholipase A2 beta-bungarotoxin A6 chain.